Consider the following 167-residue polypeptide: Claudin domain-containing protein 2 (167 aa).

4 consecutive transmembrane segments (helical) span residues leucine 13–threonine 32, valine 61–isoleucine 81, threonine 96–serine 116, and tyrosine 130–alanine 150.

Belongs to the PMP-22/EMP/MP20 family.

Its subcellular location is the membrane. The sequence is that of Claudin domain-containing protein 2 (Cldnd2) from Mus musculus (Mouse).